Here is a 52-residue protein sequence, read N- to C-terminus: Keratin-associated protein 19-2 (52 aa).

The protein belongs to the KRTAP type 19 family. Interacts with hair keratins.

In the hair cortex, hair keratin intermediate filaments are embedded in an interfilamentous matrix, consisting of hair keratin-associated proteins (KRTAP), which are essential for the formation of a rigid and resistant hair shaft through their extensive disulfide bond cross-linking with abundant cysteine residues of hair keratins. The matrix proteins include the high-sulfur and high-glycine-tyrosine keratins. This is Keratin-associated protein 19-2 (KRTAP19-2) from Homo sapiens (Human).